A 191-amino-acid chain; its full sequence is Putative glutathione-dependent formaldehyde-activating enzyme (191 aa).

One can recognise a CENP-V/GFA domain in the interval 20–166 (FPGGNLYCKC…FHSLGLETYD (147 aa)). 7 residues coordinate Zn(2+): Cys27, Cys29, Cys48, Cys50, Cys53, Cys95, and Cys98.

The protein belongs to the Gfa family. Requires Zn(2+) as cofactor.

The enzyme catalyses S-(hydroxymethyl)glutathione = glutathione + formaldehyde. It participates in one-carbon metabolism; formaldehyde degradation; formate from formaldehyde (glutathione route): step 1/3. Functionally, catalyzes the condensation of formaldehyde and glutathione to S-hydroxymethylglutathione. This chain is Putative glutathione-dependent formaldehyde-activating enzyme, found in Aspergillus niger (strain ATCC MYA-4892 / CBS 513.88 / FGSC A1513).